Here is a 447-residue protein sequence, read N- to C-terminus: Trigger factor (447 aa).

Residues 164 to 249 (GDLVVIDFIG…VKEVKQAVVP (86 aa)) form the PPIase FKBP-type domain.

The protein belongs to the FKBP-type PPIase family. Tig subfamily.

It localises to the cytoplasm. It catalyses the reaction [protein]-peptidylproline (omega=180) = [protein]-peptidylproline (omega=0). Its function is as follows. Involved in protein export. Acts as a chaperone by maintaining the newly synthesized protein in an open conformation. Functions as a peptidyl-prolyl cis-trans isomerase. This chain is Trigger factor, found in Rhodospirillum rubrum (strain ATCC 11170 / ATH 1.1.1 / DSM 467 / LMG 4362 / NCIMB 8255 / S1).